Consider the following 509-residue polypeptide: Pancreatic secretory granule membrane major glycoprotein GP2 (509 aa).

Residues 1–21 (MVGSYVLWLALASCILTLASP) form the signal peptide. The D10C stretch occupies residues 36–56 (DPCQNYTLLDEPSRSTENTEG). Disulfide bonds link C38/C132, C60/C147, C82/C120, C88/C152, C113/C121, C162/C172, C166/C181, C183/C213, C201/C292, and C233/C256. N-linked (GlcNAc...) asparagine glycosylation is found at N40, N97, and N109. One can recognise an EGF-like domain in the interval 158–202 (ATDKCKNLCRPEEACSFLNGTWDCFCRSDLNSSDVHSLQPRLNCG). Residues N176, N188, and N232 are each glycosylated (N-linked (GlcNAc...) asparagine). The tract at residues 200 to 293 (NCGAKEIQVS…TILNINFQCA (94 aa)) is ZP-N. The ZP domain maps to 200-456 (NCGAKEIQVS…PCCSRSQQRS (257 aa)). N-linked (GlcNAc...) asparagine glycans are attached at residues N263 and N314. A flexible ZP-N/ZP-C linker region spans residues 294–317 (YPLDMKVSLQTALHPIVSSLNISV). The segment at 318-329 (DGEGEFTVRMAL) is internal hydrophobic patch (IHP). The ZP-C stretch occupies residues 318–456 (DGEGEFTVRM…PCCSRSQQRS (139 aa)). 3 disulfides stabilise this stretch: C373/C433, C394/C449, and C438/C445. Residues 463 to 471 (PARVLDLGP) form an external hydrophobic patch (EHP) region. D484 carries the GPI-anchor amidated aspartate lipid modification. The propeptide at 485-509 (GTPSTAGFLLAWPMLLLPILLAELF) is removed in mature form.

In terms of assembly, interacts with SYCN. Interacts with bacterial adhesin fimH. Post-translationally, N-glycosylated. Expressed in pancreas.

It localises to the zymogen granule membrane. The protein resides in the secreted. Its subcellular location is the cell membrane. The protein localises to the apical cell membrane. It is found in the membrane raft. It localises to the endosome. Functionally, functions as an intestinal M-cell transcytotic receptor specific of type-I-piliated bacteria that participates in the mucosal immune response toward these bacteria. At the apical membrane of M-cells it binds fimH, a protein of the bacteria type I pilus tip. Internalizes bound bacteria, like E.coli and S.typhimurium, from the lumen of the intestine and delivers them, through M-cells, to the underlying organized lymphoid follicles where they are captured by antigen-presenting dendritic cells to elicit a mucosal immune response. The chain is Pancreatic secretory granule membrane major glycoprotein GP2 from Canis lupus familiaris (Dog).